Consider the following 55-residue polypeptide: Metallothionein-3 (55 aa).

The protein belongs to the metallothionein superfamily. Type 11 family.

The protein is Metallothionein-3 (MTP3) of Yarrowia lipolytica (strain CLIB 122 / E 150) (Yeast).